A 635-amino-acid chain; its full sequence is DNA-directed RNA polymerase III subunit rpc3 (635 aa).

3 disordered regions span residues 131–164 (PEQS…SDQQ), 246–295 (VPRG…GYDT), and 386–424 (SGSI…LSSG). Residues 272–292 (SVDEDDEQDEEENEWSDDEMG) are compositionally biased toward acidic residues. A compositionally biased stretch (basic and acidic residues) spans 398–407 (DNRRGKRPLE). Residues 411–424 (NGTNHEGANGLSSG) are compositionally biased toward polar residues. The tract at residues 562–583 (TYKAMSRCFQRLRFERNRLKEF) is leucine-zipper.

Belongs to the RNA polymerase beta chain family. In terms of assembly, component of the RNA polymerase III (Pol III) complex consisting of 17 subunits.

It localises to the nucleus. Its function is as follows. DNA-dependent RNA polymerase catalyzes the transcription of DNA into RNA using the four ribonucleoside triphosphates as substrates. Specific core component of RNA polymerase III which synthesizes small RNAs, such as 5S rRNA and tRNAs. In Aspergillus clavatus (strain ATCC 1007 / CBS 513.65 / DSM 816 / NCTC 3887 / NRRL 1 / QM 1276 / 107), this protein is DNA-directed RNA polymerase III subunit rpc3 (rpc82).